We begin with the raw amino-acid sequence, 459 residues long: Uterine milk protein (459 aa).

Residues 1-25 (MSHGRMNLALSLVFILCGLFNSIFC) form the signal peptide. An N-linked (GlcNAc...) asparagine glycan is attached at Asn-268.

The protein belongs to the serpin family. UTMP subfamily.

This is Uterine milk protein from Bos taurus (Bovine).